Here is a 564-residue protein sequence, read N- to C-terminus: Proline--tRNA ligase (564 aa).

This sequence belongs to the class-II aminoacyl-tRNA synthetase family. ProS type 1 subfamily. As to quaternary structure, homodimer.

It is found in the cytoplasm. It catalyses the reaction tRNA(Pro) + L-proline + ATP = L-prolyl-tRNA(Pro) + AMP + diphosphate. Catalyzes the attachment of proline to tRNA(Pro) in a two-step reaction: proline is first activated by ATP to form Pro-AMP and then transferred to the acceptor end of tRNA(Pro). As ProRS can inadvertently accommodate and process non-cognate amino acids such as alanine and cysteine, to avoid such errors it has two additional distinct editing activities against alanine. One activity is designated as 'pretransfer' editing and involves the tRNA(Pro)-independent hydrolysis of activated Ala-AMP. The other activity is designated 'posttransfer' editing and involves deacylation of mischarged Ala-tRNA(Pro). The misacylated Cys-tRNA(Pro) is not edited by ProRS. This is Proline--tRNA ligase from Bacillus subtilis (strain 168).